The primary structure comprises 243 residues: MSMLCYTLIIAFLIGIWAVPKSEDNAPLGSPATSDLSDTSCAQTHEGLKTSRNTDQRHPAPRSQRIKQFGSASNIIVDPKLFQKRRFQSPRVLFSTQPPPLSRDEQSVEFLDNEDALNRNIRAKRETHPVHNRGEYSVCDSISVWVANKTTATDIKGKPVTVMVDVNLNNHVYKQYFFETKCRNPNPVPSGCRGIDSRHWNSYCTTTHTFVKALTMEGNRASWRFIRIDTACVCVISRKTENF.

Residues 1–18 form the signal peptide; it reads MSMLCYTLIIAFLIGIWA. The propeptide occupies 19–125; it reads VPKSEDNAPL…ALNRNIRAKR (107 aa). Disulfide bonds link Cys-139/Cys-204, Cys-182/Cys-232, and Cys-192/Cys-234. Residue Asn-148 is glycosylated (N-linked (GlcNAc...) asparagine).

It belongs to the NGF-beta family. In terms of assembly, homodimer; non-covalently linked. In terms of tissue distribution, expressed by the venom gland.

Its subcellular location is the secreted. In terms of biological role, nerve growth factor is important for the development and maintenance of the sympathetic and sensory nervous systems. It stimulates division and differentiation of sympathetic and embryonic sensory neurons as well as basal forebrain cholinergic neurons in the brain. Its relevance in the snake venom is not clear. However, it has been shown to inhibit metalloproteinase-dependent proteolysis of platelet glycoprotein Ib alpha, suggesting a metalloproteinase inhibition to prevent metalloprotease autodigestion and/or protection against prey proteases. Binds a lipid between the two protein chains in the homodimer. The lipid-bound form promotes histamine relase from mouse mast cells, contrary to the lipid-free form. The protein is Venom nerve growth factor 1 of Naja sputatrix (Malayan spitting cobra).